The primary structure comprises 663 residues: Preterminal protein (663 aa).

Residues 367 to 376 (SLPLPTRRRR) carry the Nuclear localization signal motif. A disordered region spans residues 374–414 (RRRVARPAPPSPSPSPEPVELEMPPLEGEEEEEEEELPPRS). Positions 380–390 (PAPPSPSPSPE) are enriched in pro residues. Over residues 400–409 (EGEEEEEEEE) the composition is skewed to acidic residues. S575 bears the O-(5'-phospho-DNA)-serine mark. The disordered stretch occupies residues 632–663 (QLQPMPELNDPVQLPPLRPERQRPPLGPRRPL).

Belongs to the adenoviridae terminal protein family. Heterodimer with the polymerase; this heterodimer binds to bp 9 to 18 of the genome. Interacts with host POU2F1; POU2F1 binds to the auxiliary sequences in the inverted terminal repeats and tethers the pTP-POL heterodimer to the origin DNA thereby participating in the assembly of the pre-initiation complex (POL-TP-DBP-NFIA-POU2F1). Preterminal protein is used to replicate viral genome, upon genomic encapsidation it is processed first into iTP and finally into TP by adenovirus protease.

The protein localises to the host nucleus matrix. In terms of biological role, protein covalently bound to the viral DNA that acts as a primer for viral genomic replication by DNA strand displacement. Assembles on the viral origin of replication in an initiation complex with viral polymerase, DBP, host NFIA and host POU2F1/OCT1. During initiation, the polymerase covalently couples the first dCTP with Ser-580 of pTP. The terminal protein stimulates the template activity over 20 fold compared to protein-free templates. Neo-synthesized viral genomes are linked to two preterminal proteins, one for each 5' end. These new genomes are encapsidated in the nucleus, and during capsid maturation by viral protease, preterminal protein is first cleaved into intermediary (iTP), then into mature TP. May play a role in host nuclear matrix localization of genomic DNA. This is Preterminal protein from Bos taurus (Bovine).